We begin with the raw amino-acid sequence, 147 residues long: uncharacterized protein (147 aa).

Positions 1–21 (MRTIFVGVLLLAIMGEGRLCA) are cleaved as a signal peptide.

This is an uncharacterized protein from Treponema pallidum (strain Nichols).